Consider the following 193-residue polypeptide: Large ribosomal subunit protein bL17m (193 aa).

The protein belongs to the bacterial ribosomal protein bL17 family. In terms of assembly, component of the mitochondrial large ribosomal subunit (mt-LSU). Mature N.crassa 74S mitochondrial ribosomes consist of a small (37S) and a large (54S) subunit. The 37S small subunit contains a 16S ribosomal RNA (16S mt-rRNA) and 32 different proteins. The 54S large subunit contains a 23S rRNA (23S mt-rRNA) and 42 different proteins.

It localises to the mitochondrion. In terms of biological role, component of the mitochondrial ribosome (mitoribosome), a dedicated translation machinery responsible for the synthesis of mitochondrial genome-encoded proteins, including at least some of the essential transmembrane subunits of the mitochondrial respiratory chain. The mitoribosomes are attached to the mitochondrial inner membrane and translation products are cotranslationally integrated into the membrane. This is Large ribosomal subunit protein bL17m (mrpl8) from Neurospora crassa (strain ATCC 24698 / 74-OR23-1A / CBS 708.71 / DSM 1257 / FGSC 987).